Reading from the N-terminus, the 181-residue chain is 30 kDa heat shock protein (181 aa).

A sHSP domain is found at 33-181 (ASVQSFAPRF…PPTAKKITIQ (149 aa)). The span at 79 to 115 (GRSEREYHSSSDDNKNDQADTENQARGESSEVAKTGE) shows a compositional bias: basic and acidic residues. A disordered region spans residues 79–127 (GRSEREYHSSSDDNKNDQADTENQARGESSEVAKTGEKQVSTKKAANKS).

It belongs to the small heat shock protein (HSP20) family.

The sequence is that of 30 kDa heat shock protein (hsp30) from Emericella nidulans (strain FGSC A4 / ATCC 38163 / CBS 112.46 / NRRL 194 / M139) (Aspergillus nidulans).